Consider the following 701-residue polypeptide: Polyribonucleotide nucleotidyltransferase (701 aa).

Residues Asp487 and Asp493 each contribute to the Mg(2+) site. A KH domain is found at Pro554–Val613. The S1 motif domain occupies Gly623–Lys691.

Belongs to the polyribonucleotide nucleotidyltransferase family. Component of the RNA degradosome, which is a multiprotein complex involved in RNA processing and mRNA degradation. The cofactor is Mg(2+).

The protein resides in the cytoplasm. The enzyme catalyses RNA(n+1) + phosphate = RNA(n) + a ribonucleoside 5'-diphosphate. Its function is as follows. Involved in mRNA degradation. Catalyzes the phosphorolysis of single-stranded polyribonucleotides processively in the 3'- to 5'-direction. In Pseudomonas fluorescens (strain SBW25), this protein is Polyribonucleotide nucleotidyltransferase.